Consider the following 89-residue polypeptide: Large ribosomal subunit protein eL37A (89 aa).

Residues C19, C22, C34, and C37 each contribute to the Zn(2+) site. Residues 19–37 form a C4-type zinc finger; the sequence is CRRCGKRSFHIQKSTCACC.

It belongs to the eukaryotic ribosomal protein eL37 family. Component of the large ribosomal subunit (LSU). Mature yeast ribosomes consist of a small (40S) and a large (60S) subunit. The 40S small subunit contains 1 molecule of ribosomal RNA (18S rRNA) and at least 33 different proteins. The large 60S subunit contains 3 rRNA molecules (25S, 5.8S and 5S rRNA) and at least 46 different proteins. Zn(2+) is required as a cofactor.

The protein resides in the cytoplasm. Component of the ribosome, a large ribonucleoprotein complex responsible for the synthesis of proteins in the cell. The small ribosomal subunit (SSU) binds messenger RNAs (mRNAs) and translates the encoded message by selecting cognate aminoacyl-transfer RNA (tRNA) molecules. The large subunit (LSU) contains the ribosomal catalytic site termed the peptidyl transferase center (PTC), which catalyzes the formation of peptide bonds, thereby polymerizing the amino acids delivered by tRNAs into a polypeptide chain. The nascent polypeptides leave the ribosome through a tunnel in the LSU and interact with protein factors that function in enzymatic processing, targeting, and the membrane insertion of nascent chains at the exit of the ribosomal tunnel. The sequence is that of Large ribosomal subunit protein eL37A (rpl3703) from Schizosaccharomyces pombe (strain 972 / ATCC 24843) (Fission yeast).